Consider the following 470-residue polypeptide: Acetyl-CoA decarbonylase/synthase complex subunit gamma 1 (470 aa).

A 4Fe-4S domain is found at 1 to 60; the sequence is MKINSPLEAYKYLPQTNCGECGQPTCMAFASTLIDRSGKTTDCPPLIKEKKFAKKLAELD. Residues Cys-18, Cys-21, Cys-26, and Cys-43 each contribute to the [4Fe-4S] cluster site.

Heterodimer of delta and gamma chains. The ACDS complex is made up of alpha, epsilon, beta, gamma and delta chains with a probable stoichiometry of (alpha(2)epsilon(2))(4)-beta(8)-(gamma(1)delta(1))(8). Corrinoid is required as a cofactor. The cofactor is [4Fe-4S] cluster.

The catalysed reaction is 5,6,7,8-tetrahydrosarcinapterin + methyl-Co(III)-[corrinoid Fe-S protein] = 5-methyltetrahydrosarcinapterin + Co(I)-[corrinoid Fe-S protein] + H(+). The protein operates within one-carbon metabolism; methanogenesis from acetate. Its function is as follows. Part of a complex that catalyzes the reversible cleavage of acetyl-CoA, allowing growth on acetate as sole source of carbon and energy. The chain is Acetyl-CoA decarbonylase/synthase complex subunit gamma 1 from Methanosarcina mazei (strain ATCC BAA-159 / DSM 3647 / Goe1 / Go1 / JCM 11833 / OCM 88) (Methanosarcina frisia).